Reading from the N-terminus, the 428-residue chain is Adenylosuccinate synthetase (428 aa).

GTP-binding positions include 11–17 and 39–41; these read GDEGKGK and GHT. Asp12 acts as the Proton acceptor in catalysis. Residues Asp12 and Gly39 each coordinate Mg(2+). Residues 12–15, 37–40, Thr130, Arg144, Asn226, Thr241, and Arg305 each bind IMP; these read DEGK and NAGH. The active-site Proton donor is the His40. 301–307 contacts substrate; it reads VTTGRKR. GTP contacts are provided by residues Arg307, 333–335, and 415–417; these read KLD and GTG.

This sequence belongs to the adenylosuccinate synthetase family. In terms of assembly, homodimer. Mg(2+) serves as cofactor.

It is found in the cytoplasm. The catalysed reaction is IMP + L-aspartate + GTP = N(6)-(1,2-dicarboxyethyl)-AMP + GDP + phosphate + 2 H(+). It functions in the pathway purine metabolism; AMP biosynthesis via de novo pathway; AMP from IMP: step 1/2. Its function is as follows. Plays an important role in the de novo pathway and in the salvage pathway of purine nucleotide biosynthesis. Catalyzes the first committed step in the biosynthesis of AMP from IMP. The chain is Adenylosuccinate synthetase from Lodderomyces elongisporus (strain ATCC 11503 / CBS 2605 / JCM 1781 / NBRC 1676 / NRRL YB-4239) (Yeast).